We begin with the raw amino-acid sequence, 232 residues long: Large ribosomal subunit protein uL1 (232 aa).

This sequence belongs to the universal ribosomal protein uL1 family. In terms of assembly, part of the 50S ribosomal subunit.

Functionally, binds directly to 23S rRNA. The L1 stalk is quite mobile in the ribosome, and is involved in E site tRNA release. Protein L1 is also a translational repressor protein, it controls the translation of the L11 operon by binding to its mRNA. The sequence is that of Large ribosomal subunit protein uL1 from Lysinibacillus sphaericus (strain C3-41).